The sequence spans 225 residues: Uridylate kinase (225 aa).

9-10 (GS) serves as a coordination point for ATP. Gly-46 contacts UMP. Residues Gly-47 and Arg-51 each coordinate ATP. UMP-binding positions include Asp-67 and 115–121 (THPAHTT). ATP contacts are provided by Thr-141, Asn-142, Tyr-147, and Asp-150.

This sequence belongs to the UMP kinase family. In terms of assembly, homohexamer.

Its subcellular location is the cytoplasm. The enzyme catalyses UMP + ATP = UDP + ADP. It participates in pyrimidine metabolism; CTP biosynthesis via de novo pathway; UDP from UMP (UMPK route): step 1/1. Its activity is regulated as follows. Inhibited by UTP. Catalyzes the reversible phosphorylation of UMP to UDP. This chain is Uridylate kinase, found in Methanococcus maripaludis (strain DSM 14266 / JCM 13030 / NBRC 101832 / S2 / LL).